A 272-amino-acid polypeptide reads, in one-letter code: Shikimate dehydrogenase (NADP(+)) (272 aa).

Shikimate contacts are provided by residues Ser14 to Ser16 and Thr61. The active-site Proton acceptor is the Lys65. Residue Asp102 participates in shikimate binding. Residues Gly127 to Ala131, Asn151 to Lys156, and Leu215 contribute to the NADP(+) site. Residue Tyr217 coordinates shikimate. Residue Gly239 participates in NADP(+) binding.

Belongs to the shikimate dehydrogenase family. As to quaternary structure, homodimer.

It catalyses the reaction shikimate + NADP(+) = 3-dehydroshikimate + NADPH + H(+). The protein operates within metabolic intermediate biosynthesis; chorismate biosynthesis; chorismate from D-erythrose 4-phosphate and phosphoenolpyruvate: step 4/7. Its function is as follows. Involved in the biosynthesis of the chorismate, which leads to the biosynthesis of aromatic amino acids. Catalyzes the reversible NADPH linked reduction of 3-dehydroshikimate (DHSA) to yield shikimate (SA). This is Shikimate dehydrogenase (NADP(+)) from Coxiella burnetii (strain CbuG_Q212) (Coxiella burnetii (strain Q212)).